The sequence spans 363 residues: Aminomethyltransferase (363 aa).

Belongs to the GcvT family. As to quaternary structure, the glycine cleavage system is composed of four proteins: P, T, L and H.

The catalysed reaction is N(6)-[(R)-S(8)-aminomethyldihydrolipoyl]-L-lysyl-[protein] + (6S)-5,6,7,8-tetrahydrofolate = N(6)-[(R)-dihydrolipoyl]-L-lysyl-[protein] + (6R)-5,10-methylene-5,6,7,8-tetrahydrofolate + NH4(+). Functionally, the glycine cleavage system catalyzes the degradation of glycine. In Prosthecochloris aestuarii (strain DSM 271 / SK 413), this protein is Aminomethyltransferase.